Reading from the N-terminus, the 732-residue chain is 1,4-alpha-glucan branching enzyme GlgB (732 aa).

The active-site Nucleophile is D412. Catalysis depends on E465, which acts as the Proton donor.

It belongs to the glycosyl hydrolase 13 family. GlgB subfamily. Monomer.

It carries out the reaction Transfers a segment of a (1-&gt;4)-alpha-D-glucan chain to a primary hydroxy group in a similar glucan chain.. It functions in the pathway glycan biosynthesis; glycogen biosynthesis. Catalyzes the formation of the alpha-1,6-glucosidic linkages in glycogen by scission of a 1,4-alpha-linked oligosaccharide from growing alpha-1,4-glucan chains and the subsequent attachment of the oligosaccharide to the alpha-1,6 position. In Pseudomonas aeruginosa (strain ATCC 15692 / DSM 22644 / CIP 104116 / JCM 14847 / LMG 12228 / 1C / PRS 101 / PAO1), this protein is 1,4-alpha-glucan branching enzyme GlgB.